Here is a 348-residue protein sequence, read N- to C-terminus: dTDP-glucose 4,6-dehydratase (348 aa).

Residues 15 to 16, 37 to 40, 62 to 63, and 82 to 86 contribute to the NAD(+) site; these read FI, DKLT, DI, and YAAES. Substrate contacts are provided by S86 and N88. T101 provides a ligand contact to NAD(+). T125 provides a ligand contact to substrate. The active-site Proton donor is the D126. Residues E127 and Y161 each act as proton acceptor in the active site. Position 161–165 (161–165) interacts with NAD(+); it reads YSSTK. N190 is a binding site for substrate. Residue N191 participates in NAD(+) binding. Substrate contacts are provided by residues 200–205, 216–218, R225, N260, and 283–287; these read KFIPRQ, KLY, and DRAGH.

It belongs to the NAD(P)-dependent epimerase/dehydratase family. dTDP-glucose dehydratase subfamily. Homodimer. It depends on NAD(+) as a cofactor.

It catalyses the reaction dTDP-alpha-D-glucose = dTDP-4-dehydro-6-deoxy-alpha-D-glucose + H2O. It functions in the pathway carbohydrate biosynthesis; dTDP-L-rhamnose biosynthesis. Its function is as follows. Catalyzes the dehydration of dTDP-D-glucose to form dTDP-6-deoxy-D-xylo-4-hexulose via a three-step process involving oxidation, dehydration and reduction. The chain is dTDP-glucose 4,6-dehydratase (rmlB) from Streptococcus mutans serotype c (strain ATCC 700610 / UA159).